The following is a 396-amino-acid chain: S-adenosylmethionine synthase (396 aa).

His-16 contacts ATP. Asp-18 serves as a coordination point for Mg(2+). Position 44 (Glu-44) interacts with K(+). Glu-57 and Gln-100 together coordinate L-methionine. The segment at 100 to 110 (QSVDINQGVDR) is flexible loop. ATP-binding positions include 165–167 (DAK), 231–232 (KF), Asp-240, 246–247 (RK), Ala-263, and Lys-267. Residue Asp-240 participates in L-methionine binding. Position 271 (Lys-271) interacts with L-methionine.

It belongs to the AdoMet synthase family. Homotetramer; dimer of dimers. Mg(2+) serves as cofactor. It depends on K(+) as a cofactor.

The protein localises to the cytoplasm. The enzyme catalyses L-methionine + ATP + H2O = S-adenosyl-L-methionine + phosphate + diphosphate. It participates in amino-acid biosynthesis; S-adenosyl-L-methionine biosynthesis; S-adenosyl-L-methionine from L-methionine: step 1/1. Its function is as follows. Catalyzes the formation of S-adenosylmethionine (AdoMet) from methionine and ATP. The overall synthetic reaction is composed of two sequential steps, AdoMet formation and the subsequent tripolyphosphate hydrolysis which occurs prior to release of AdoMet from the enzyme. This Azotobacter vinelandii (strain DJ / ATCC BAA-1303) protein is S-adenosylmethionine synthase.